We begin with the raw amino-acid sequence, 574 residues long: K(+)/H(+) antiporter NhaP2 (574 aa).

The next 13 helical transmembrane spans lie at 6–26, 34–54, 58–78, 87–107, 109–129, 173–193, 196–216, 219–239, 242–262, 271–291, 299–319, 335–355, and 359–379; these read INSF…LSPM, ILLI…GGIL, YSTA…DGGM, VALW…TSIT, VMAA…GAIV, IAIL…ISFI, FGLG…LVNV, LAEG…YATS, LGGS…NKPT, VLDG…GLLL, IWLP…PLAV, WFIS…VFPM, and LPGA…SLLV. An RCK C-terminal domain is found at 405–486; sequence SGVEIYPKSE…LEALSNLFSQ (82 aa).

The protein belongs to the monovalent cation:proton antiporter 1 (CPA1) transporter (TC 2.A.36) family. NhaP2 subfamily.

Its subcellular location is the cell inner membrane. It catalyses the reaction K(+)(in) + H(+)(out) = K(+)(out) + H(+)(in). In terms of biological role, k(+)/H(+) antiporter that extrudes potassium in exchange for external protons and maintains the internal concentration of potassium under toxic levels. The sequence is that of K(+)/H(+) antiporter NhaP2 from Shewanella oneidensis (strain ATCC 700550 / JCM 31522 / CIP 106686 / LMG 19005 / NCIMB 14063 / MR-1).